The primary structure comprises 54 residues: Ferredoxin (54 aa).

2 consecutive 4Fe-4S ferredoxin-type domains span residues 2-28 (HVIS…EGET) and 29-54 (KYVV…ISAE). Residues cysteine 8, cysteine 11, cysteine 14, cysteine 18, cysteine 36, cysteine 39, cysteine 42, and cysteine 46 each coordinate [4Fe-4S] cluster.

It depends on [4Fe-4S] cluster as a cofactor.

Ferredoxins are iron-sulfur proteins that transfer electrons in a wide variety of metabolic reactions. The protein is Ferredoxin of Megasphaera elsdenii.